The primary structure comprises 338 residues: Uroporphyrinogen decarboxylase (338 aa).

Substrate-binding positions include 27 to 31, Asp77, Tyr151, Ser203, and His317; that span reads RQAGR.

Belongs to the uroporphyrinogen decarboxylase family. Homodimer.

Its subcellular location is the cytoplasm. It carries out the reaction uroporphyrinogen III + 4 H(+) = coproporphyrinogen III + 4 CO2. The protein operates within porphyrin-containing compound metabolism; protoporphyrin-IX biosynthesis; coproporphyrinogen-III from 5-aminolevulinate: step 4/4. In terms of biological role, catalyzes the decarboxylation of four acetate groups of uroporphyrinogen-III to yield coproporphyrinogen-III. The sequence is that of Uroporphyrinogen decarboxylase from Wolbachia sp. subsp. Drosophila simulans (strain wRi).